Reading from the N-terminus, the 341-residue chain is Methionine import ATP-binding protein MetN 3 (341 aa).

The region spanning 2–241 (ILLENVKKIY…PQQDITKRFV (240 aa)) is the ABC transporter domain. Residue 38–45 (GYSGAGKS) participates in ATP binding.

It belongs to the ABC transporter superfamily. Methionine importer (TC 3.A.1.24) family. The complex is composed of two ATP-binding proteins (MetN), two transmembrane proteins (MetI) and a solute-binding protein (MetQ).

It localises to the cell membrane. The catalysed reaction is L-methionine(out) + ATP + H2O = L-methionine(in) + ADP + phosphate + H(+). The enzyme catalyses D-methionine(out) + ATP + H2O = D-methionine(in) + ADP + phosphate + H(+). Part of the ABC transporter complex MetNIQ involved in methionine import. Responsible for energy coupling to the transport system. In Bacillus anthracis, this protein is Methionine import ATP-binding protein MetN 3.